A 303-amino-acid chain; its full sequence is Movement protein (303 aa).

The span at 1 to 18 (MSNIVSPFSGSSRTTSDV) shows a compositional bias: polar residues. 2 disordered regions span residues 1–24 (MSNI…QAGG) and 267–303 (EESE…LRIK).

It belongs to the bromovirus movement protein family. In terms of processing, phosphorylated by host.

Its subcellular location is the host cell junction. The protein resides in the host plasmodesma. Transports viral genome to neighboring plant cells directly through plasmosdesmata, without any budding. The movement protein allows efficient cell to cell propagation, by bypassing the host cell wall barrier. Acts by forming a tubular structure at the host plasmodesmata, enlarging it enough to allow free passage of virion capsids. The chain is Movement protein from Brome mosaic virus (BMV).